We begin with the raw amino-acid sequence, 333 residues long: Probable G-protein coupled receptor 33 (333 aa).

At 1–30 (MDLINSTDYLINASTLVRNSTQFLAPASKM) the chain is on the extracellular side. N-linked (GlcNAc...) asparagine glycosylation is found at N5, N12, and N19. The chain crosses the membrane as a helical span at residues 31–53 (IIALSLYISSIIGTITNGLYLWV). Over 54-64 (LRFKMKQTVNT) the chain is Cytoplasmic. A helical transmembrane segment spans residues 65–86 (LLFFHLILSYFISTMILPFMAT). Over 87-103 (SQLQDNHWNFGTALCKV) the chain is Extracellular. The cysteines at positions 101 and 179 are disulfide-linked. A helical transmembrane segment spans residues 104–124 (FNGTLSLGMFTSVFFLSAIGL). Over 125 to 143 (DRYLLTLHPVWSQQHRTPR) the chain is Cytoplasmic. The chain crosses the membrane as a helical span at residues 144–165 (WASSIVLGVWISAAALSIPYLI). Residues 166–209 (FRQTHHDRKGKVTCQNNYAVSTNWESKEMQALRQWIHVACFISR) are Extracellular-facing. A helical transmembrane segment spans residues 210-230 (FLLGFLLPFFIIIFCYERVAS). The Cytoplasmic portion of the chain corresponds to 231–246 (KVKERSLFKSSKPFKV). A helical transmembrane segment spans residues 247–268 (MMTAIISFFVCWMPYHIHQGLL). Residues 269–283 (LTMNQSLLLELTLIL) are Extracellular-facing. The N-linked (GlcNAc...) asparagine glycan is linked to N272. Residues 284–303 (TVLTTSFNTIFSPTLYLFVG) form a helical membrane-spanning segment. Residues 304–333 (ENFKKVFKKSILALFESTFSEDSSVERTQT) lie on the Cytoplasmic side of the membrane.

Belongs to the G-protein coupled receptor 1 family.

It is found in the cell membrane. In terms of biological role, orphan receptor; could be a chemoattractant receptor. This is Probable G-protein coupled receptor 33 (GPR33) from Pan paniscus (Pygmy chimpanzee).